The chain runs to 284 residues: Sulfotransferase 2A1 (284 aa).

3'-phosphoadenylyl sulfate-binding residues include lysine 43, serine 44, glycine 45, threonine 46, asparagine 47, and tryptophan 48. Histidine 98 acts as the Proton acceptor in catalysis. Residues arginine 120, serine 128, tyrosine 183, serine 217, methionine 222, arginine 246, lysine 247, and glycine 248 each contribute to the 3'-phosphoadenylyl sulfate site.

This sequence belongs to the sulfotransferase 1 family. Homodimer.

It localises to the cytoplasm. It catalyses the reaction an alcohol + 3'-phosphoadenylyl sulfate = an alkyl sulfate + adenosine 3',5'-bisphosphate + H(+). It carries out the reaction taurolithocholate + 3'-phosphoadenylyl sulfate = taurolithocholate 3-sulfate + adenosine 3',5'-bisphosphate + H(+). The catalysed reaction is lithocholate + 3'-phosphoadenylyl sulfate = lithocholate sulfate + adenosine 3',5'-bisphosphate + H(+). The enzyme catalyses (24S)-hydroxycholesterol + 3'-phosphoadenylyl sulfate = (24S)-hydroxycholesterol 24-sulfate + adenosine 3',5'-bisphosphate + H(+). It catalyses the reaction (24S)-hydroxycholesterol + 3'-phosphoadenylyl sulfate = (24S)-hydroxycholesterol 3-sulfate + adenosine 3',5'-bisphosphate + H(+). It carries out the reaction (24S)-hydroxycholesterol 24-sulfate + 3'-phosphoadenylyl sulfate = (24S)-hydroxycholesterol 3,24-disulfate + adenosine 3',5'-bisphosphate + H(+). The catalysed reaction is 3beta-hydroxyandrost-5-en-17-one + 3'-phosphoadenylyl sulfate = dehydroepiandrosterone 3-sulfate + adenosine 3',5'-bisphosphate + H(+). The enzyme catalyses pregnenolone + 3'-phosphoadenylyl sulfate = pregnenolone sulfate + adenosine 3',5'-bisphosphate + H(+). It catalyses the reaction androsterone + 3'-phosphoadenylyl sulfate = androsterone 3alpha-sulfate + adenosine 3',5'-bisphosphate + H(+). Functionally, sulfotransferase that utilizes 3'-phospho-5'-adenylyl sulfate (PAPS) as sulfonate donor to catalyze the sulfonation of steroids and bile acids in the liver and adrenal glands. Mediates the sulfation of a wide range of steroids and sterols, including pregnenolone, androsterone, DHEA, bile acids, cholesterol and as well many xenobiotics that contain alcohol and phenol functional groups. Sulfonation increases the water solubility of most compounds, and therefore their renal excretion, but it can also result in bioactivation to form active metabolites. Plays an important role in maintening steroid and lipid homeostasis. Plays a key role in bile acid metabolism. In addition, catalyzes the metabolic activation of potent carcinogenic polycyclic arylmethanols. The chain is Sulfotransferase 2A1 (Sult2a1) from Rattus norvegicus (Rat).